Reading from the N-terminus, the 261-residue chain is MRIALGIEYDGAKYCGWQRQVDVDSVQERLEKALSHIANKPIAVFCAGRTDTGVHGTGQVVHFDVDVDRQMVAWTIGVNAHLPRDISVRWATQVSDDFHARFSATARRYRYIIYNSALRPAIFGVGVSHYHGHLDEKKMHEAAQYLVGEHDFTSVRASQCQSRSPWRAMKHVNVSRQGDFVIIDIKANAFVHHMVRNIAGSLIRVGRGQETPEWMKWVLEQKDRRVAGETAKAAGLYLVAVDYPEEFGLPSSPLGPIFLPD.

Catalysis depends on D51, which acts as the Nucleophile. Y109 lines the substrate pocket.

It belongs to the tRNA pseudouridine synthase TruA family. In terms of assembly, homodimer.

The catalysed reaction is uridine(38/39/40) in tRNA = pseudouridine(38/39/40) in tRNA. Formation of pseudouridine at positions 38, 39 and 40 in the anticodon stem and loop of transfer RNAs. The polypeptide is tRNA pseudouridine synthase A (Photobacterium profundum (strain SS9)).